An 854-amino-acid chain; its full sequence is Protein SEY1 homolog (854 aa).

At Met-1–Ser-724 the chain is on the cytoplasmic side. The GB1/RHD3-type G domain maps to Gly-49–Ser-291. Position 59–66 (Gly-59–Ser-66) interacts with GTP. A coiled-coil region spans residues Lys-336–Lys-386. A helical membrane pass occupies residues Leu-725–Leu-745. Residues Thr-746–Pro-748 are Lumenal-facing. Residues Ile-749 to Gln-769 form a helical membrane-spanning segment. The Cytoplasmic portion of the chain corresponds to Leu-770–Asp-854. Residues Gly-808–Asp-854 are disordered. Residues Ser-822–Ser-839 show a composition bias toward low complexity. Residues Cys-845–Asp-854 show a composition bias toward basic and acidic residues.

This sequence belongs to the TRAFAC class dynamin-like GTPase superfamily. GB1/RHD3 GTPase family. RHD3 subfamily.

The protein localises to the endoplasmic reticulum membrane. Functionally, probable GTP-binding protein that may be involved in cell development. The chain is Protein SEY1 homolog from Trypanosoma brucei brucei (strain 927/4 GUTat10.1).